The primary structure comprises 54 residues: Large ribosomal subunit protein bL33 (54 aa).

The protein belongs to the bacterial ribosomal protein bL33 family.

The sequence is that of Large ribosomal subunit protein bL33 from Stenotrophomonas maltophilia (strain R551-3).